Here is a 551-residue protein sequence, read N- to C-terminus: Eukaryotic translation initiation factor 3 subunit D-2 (551 aa).

Positions 91 to 154 (TKPYQRGRYR…RNTQNMGRRF (64 aa)) are disordered. Positions 95–113 (QRGRYRPNMRNNVRSRGRT) are enriched in basic residues. A compositionally biased stretch (low complexity) spans 121-136 (ASLGGSTAGGATASTT). The interval 290–304 (QFDLLTVNETSVEPP) is RNA gate. The segment at 527-551 (PENAFDSDGDEEEESSDPLSNSNDN) is disordered. Residues 531–542 (FDSDGDEEEESS) are compositionally biased toward acidic residues.

The protein belongs to the eIF-3 subunit D family. Component of the eukaryotic translation initiation factor 3 (eIF-3) complex. The eIF-3 complex interacts with pix.

It localises to the cytoplasm. Its function is as follows. mRNA cap-binding component of the eukaryotic translation initiation factor 3 (eIF-3) complex, which is involved in protein synthesis of a specialized repertoire of mRNAs and, together with other initiation factors, stimulates binding of mRNA and methionyl-tRNAi to the 40S ribosome. The eIF-3 complex specifically targets and initiates translation of a subset of mRNAs involved in cell proliferation. In the eIF-3 complex, eif3d specifically recognizes and binds the 7-methylguanosine cap of a subset of mRNAs. This is Eukaryotic translation initiation factor 3 subunit D-2 from Drosophila melanogaster (Fruit fly).